We begin with the raw amino-acid sequence, 78 residues long: D-alanyl carrier protein (78 aa).

The 78-residue stretch at 1–78 folds into the Carrier domain; the sequence is MEFKQEVLDV…NIVNKLTELK (78 aa). The residue at position 36 (Ser36) is an O-(pantetheine 4'-phosphoryl)serine.

This sequence belongs to the DltC family. In terms of processing, 4'-phosphopantetheine is transferred from CoA to a specific serine of apo-DCP.

It is found in the cytoplasm. It functions in the pathway cell wall biogenesis; lipoteichoic acid biosynthesis. Functionally, carrier protein involved in the D-alanylation of lipoteichoic acid (LTA). The loading of thioester-linked D-alanine onto DltC is catalyzed by D-alanine--D-alanyl carrier protein ligase DltA. The DltC-carried D-alanyl group is further transferred to cell membrane phosphatidylglycerol (PG) by forming an ester bond, probably catalyzed by DltD. D-alanylation of LTA plays an important role in modulating the properties of the cell wall in Gram-positive bacteria, influencing the net charge of the cell wall. The chain is D-alanyl carrier protein from Bacillus velezensis (strain DSM 23117 / BGSC 10A6 / LMG 26770 / FZB42) (Bacillus amyloliquefaciens subsp. plantarum).